The primary structure comprises 198 residues: Thymidine kinase (198 aa).

ATP is bound by residues Gly9 to Ser16 and Asp85 to Gln88. The active-site Proton acceptor is Glu86. 4 residues coordinate Zn(2+): Cys143, Cys146, Cys180, and His183.

The protein belongs to the thymidine kinase family. Homotetramer.

It is found in the cytoplasm. The enzyme catalyses thymidine + ATP = dTMP + ADP + H(+). The protein is Thymidine kinase of Streptococcus thermophilus (strain ATCC BAA-250 / LMG 18311).